We begin with the raw amino-acid sequence, 570 residues long: Protein HEATR9 (570 aa).

This is Protein HEATR9 (HEATR9) from Homo sapiens (Human).